Reading from the N-terminus, the 171-residue chain is 3-hydroxydecanoyl-[acyl-carrier-protein] dehydratase (171 aa).

His70 is a catalytic residue.

It belongs to the thioester dehydratase family. FabA subfamily. Homodimer.

The protein resides in the cytoplasm. It catalyses the reaction a (3R)-hydroxyacyl-[ACP] = a (2E)-enoyl-[ACP] + H2O. The catalysed reaction is (3R)-hydroxydecanoyl-[ACP] = (2E)-decenoyl-[ACP] + H2O. The enzyme catalyses (2E)-decenoyl-[ACP] = (3Z)-decenoyl-[ACP]. It functions in the pathway lipid metabolism; fatty acid biosynthesis. In terms of biological role, necessary for the introduction of cis unsaturation into fatty acids. Catalyzes the dehydration of (3R)-3-hydroxydecanoyl-ACP to E-(2)-decenoyl-ACP and then its isomerization to Z-(3)-decenoyl-ACP. Can catalyze the dehydratase reaction for beta-hydroxyacyl-ACPs with saturated chain lengths up to 16:0, being most active on intermediate chain length. In Xanthomonas campestris pv. campestris (strain 8004), this protein is 3-hydroxydecanoyl-[acyl-carrier-protein] dehydratase.